A 616-amino-acid chain; its full sequence is Polypeptide N-acetylgalactosaminyltransferase 3 (616 aa).

The chain crosses the membrane as a helical; Signal-anchor for type II membrane protein span at residues 13 to 33 (FFHWKLWKFSIIVFVFLVFLF). Positions 182–291 (LPTTSIIIVF…YGWLEPLLAR (110 aa)) are catalytic subdomain A. Residues aspartate 275, histidine 277, and histidine 413 each coordinate Mn(2+). The interval 354–416 (PIRTPTFAGG…PCSVVGHVFR (63 aa)) is catalytic subdomain B. A glycan (N-linked (GlcNAc...) asparagine) is linked at asparagine 482. The 105-residue stretch at 512-616 (NRMCLDVGEN…FQKWIFGQND (105 aa)) folds into the Ricin B-type lectin domain. Cysteine 515 and cysteine 533 are oxidised to a cystine. The UDP-N-acetyl-alpha-D-galactosamine site is built by aspartate 517, glutamate 520, histidine 534, and asparagine 539. Cysteines 588 and 601 form a disulfide.

It belongs to the glycosyltransferase 2 family. GalNAc-T subfamily. Mn(2+) serves as cofactor.

It is found in the golgi apparatus. Its subcellular location is the golgi stack membrane. The enzyme catalyses L-seryl-[protein] + UDP-N-acetyl-alpha-D-galactosamine = a 3-O-[N-acetyl-alpha-D-galactosaminyl]-L-seryl-[protein] + UDP + H(+). It catalyses the reaction L-threonyl-[protein] + UDP-N-acetyl-alpha-D-galactosamine = a 3-O-[N-acetyl-alpha-D-galactosaminyl]-L-threonyl-[protein] + UDP + H(+). It participates in protein modification; protein glycosylation. In terms of biological role, catalyzes the initial reaction in O-linked oligosaccharide biosynthesis, the transfer of an N-acetyl-D-galactosamine residue to a serine or threonine residue on the protein receptor. Glycosylates FGF23. The polypeptide is Polypeptide N-acetylgalactosaminyltransferase 3 (GALNT3) (Taeniopygia guttata (Zebra finch)).